The primary structure comprises 431 residues: Adenylosuccinate synthetase (431 aa).

GTP is bound by residues 12–18 (GDEGKGK) and 40–42 (GHT). Catalysis depends on aspartate 13, which acts as the Proton acceptor. Mg(2+)-binding residues include aspartate 13 and glycine 40. IMP contacts are provided by residues 13–16 (DEGK), 38–41 (NAGH), threonine 131, arginine 145, glutamine 225, threonine 240, and arginine 304. The active-site Proton donor is the histidine 41. Substrate is bound at residue 300–306 (TVTGRKR). GTP is bound by residues arginine 306, 332–334 (KLD), and 414–416 (STS).

This sequence belongs to the adenylosuccinate synthetase family. As to quaternary structure, homodimer. Requires Mg(2+) as cofactor.

It localises to the cytoplasm. It carries out the reaction IMP + L-aspartate + GTP = N(6)-(1,2-dicarboxyethyl)-AMP + GDP + phosphate + 2 H(+). The protein operates within purine metabolism; AMP biosynthesis via de novo pathway; AMP from IMP: step 1/2. Functionally, plays an important role in the de novo pathway of purine nucleotide biosynthesis. Catalyzes the first committed step in the biosynthesis of AMP from IMP. The chain is Adenylosuccinate synthetase from Roseobacter denitrificans (strain ATCC 33942 / OCh 114) (Erythrobacter sp. (strain OCh 114)).